Consider the following 124-residue polypeptide: Ribulose bisphosphate carboxylase small subunit (124 aa).

The protein belongs to the RuBisCO small chain family. As to quaternary structure, heterohexadecamer of 8 large and 8 small subunits.

Its function is as follows. RuBisCO catalyzes two reactions: the carboxylation of D-ribulose 1,5-bisphosphate, the primary event in carbon dioxide fixation, as well as the oxidative fragmentation of the pentose substrate. Both reactions occur simultaneously and in competition at the same active site. Although the small subunit is not catalytic it is essential for maximal activity. The polypeptide is Ribulose bisphosphate carboxylase small subunit (Hydrogenophilus thermoluteolus (Pseudomonas hydrogenothermophila)).